The primary structure comprises 144 residues: Cytochrome c oxidase subunit 4 isoform 1, mitochondrial (144 aa).

Residues 1–73 are Mitochondrial matrix-facing; sequence SVVKSEDFSL…SFAEMNRGSN (73 aa). At K4 the chain carries N6-acetyllysine; alternate. Residue K4 is modified to N6-succinyllysine; alternate. K28 bears the N6-acetyllysine mark. 2 positions are modified to phosphoserine: S31 and S33. K35 is modified (N6-acetyllysine; alternate). K35 bears the N6-succinyllysine; alternate mark. An N6-acetyllysine modification is found at K42. A helical transmembrane segment spans residues 74–99; sequence EWKTVVGGAMFFIGFTALIIMWQKHY. Residues 100 to 144 lie on the Mitochondrial intermembrane side of the membrane; sequence VYGPLPQTFDKEWVGKQTKRMLDMKVNPIQGLASKWDYEKNEWKK.

The protein belongs to the cytochrome c oxidase IV family. As to quaternary structure, component of the cytochrome c oxidase (complex IV, CIV), a multisubunit enzyme composed of 14 subunits. The complex is composed of a catalytic core of 3 subunits MT-CO1, MT-CO2 and MT-CO3, encoded in the mitochondrial DNA, and 11 supernumerary subunits COX4I, COX5A, COX5B, COX6A, COX6B, COX6C, COX7A, COX7B, COX7C, COX8 and NDUFA4, which are encoded in the nuclear genome. The complex exists as a monomer or a dimer and forms supercomplexes (SCs) in the inner mitochondrial membrane with NADH-ubiquinone oxidoreductase (complex I, CI) and ubiquinol-cytochrome c oxidoreductase (cytochrome b-c1 complex, complex III, CIII), resulting in different assemblies (supercomplex SCI(1)III(2)IV(1) and megacomplex MCI(2)III(2)IV(2)). Interacts with PHB2; the interaction decreases in absence of SPHK2. Interacts with AFG1L. Interacts with ABCB7; this interaction allows the regulation of cellular iron homeostasis and cellular reactive oxygen species (ROS) levels in cardiomyocytes. Interacts with FLVCR2; this interaction occurs in the absence of heme and is disrupted upon heme binding. Interacts with IRGC.

The protein resides in the mitochondrion inner membrane. Its pathway is energy metabolism; oxidative phosphorylation. In terms of biological role, component of the cytochrome c oxidase, the last enzyme in the mitochondrial electron transport chain which drives oxidative phosphorylation. The respiratory chain contains 3 multisubunit complexes succinate dehydrogenase (complex II, CII), ubiquinol-cytochrome c oxidoreductase (cytochrome b-c1 complex, complex III, CIII) and cytochrome c oxidase (complex IV, CIV), that cooperate to transfer electrons derived from NADH and succinate to molecular oxygen, creating an electrochemical gradient over the inner membrane that drives transmembrane transport and the ATP synthase. Cytochrome c oxidase is the component of the respiratory chain that catalyzes the reduction of oxygen to water. Electrons originating from reduced cytochrome c in the intermembrane space (IMS) are transferred via the dinuclear copper A center (CU(A)) of subunit 2 and heme A of subunit 1 to the active site in subunit 1, a binuclear center (BNC) formed by heme A3 and copper B (CU(B)). The BNC reduces molecular oxygen to 2 water molecules using 4 electrons from cytochrome c in the IMS and 4 protons from the mitochondrial matrix. The sequence is that of Cytochrome c oxidase subunit 4 isoform 1, mitochondrial (COX4I1) from Hylobates agilis (Agile gibbon).